The sequence spans 270 residues: Formamidopyrimidine-DNA glycosylase (270 aa).

The Schiff-base intermediate with DNA role is filled by P2. Catalysis depends on E3, which acts as the Proton donor. K58 (proton donor; for beta-elimination activity) is an active-site residue. Residues H91, R110, and R151 each coordinate DNA. The FPG-type zinc finger occupies 236 to 270 (FVYGRGGQPCKVCGTALREVKLGQRASVYCPRCQR). The active-site Proton donor; for delta-elimination activity is R260.

It belongs to the FPG family. Monomer. Zn(2+) is required as a cofactor.

It catalyses the reaction Hydrolysis of DNA containing ring-opened 7-methylguanine residues, releasing 2,6-diamino-4-hydroxy-5-(N-methyl)formamidopyrimidine.. The catalysed reaction is 2'-deoxyribonucleotide-(2'-deoxyribose 5'-phosphate)-2'-deoxyribonucleotide-DNA = a 3'-end 2'-deoxyribonucleotide-(2,3-dehydro-2,3-deoxyribose 5'-phosphate)-DNA + a 5'-end 5'-phospho-2'-deoxyribonucleoside-DNA + H(+). Involved in base excision repair of DNA damaged by oxidation or by mutagenic agents. Acts as a DNA glycosylase that recognizes and removes damaged bases. Has a preference for oxidized purines, such as 7,8-dihydro-8-oxoguanine (8-oxoG). Has AP (apurinic/apyrimidinic) lyase activity and introduces nicks in the DNA strand. Cleaves the DNA backbone by beta-delta elimination to generate a single-strand break at the site of the removed base with both 3'- and 5'-phosphates. This chain is Formamidopyrimidine-DNA glycosylase, found in Pseudomonas putida (strain GB-1).